Consider the following 115-residue polypeptide: Protein Diedel (115 aa).

The signal sequence occupies residues 1–24 (MASPVVSLLLVGICALAFVHVARS). Cystine bridges form between Cys-26/Cys-81, Cys-27/Cys-87, Cys-42/Cys-55, Cys-60/Cys-71, and Cys-76/Cys-83.

The protein belongs to the Diedel family. In terms of tissue distribution, detected in hemolymph (at protein level). Also expressed in the fat body and is probably synthesized in the fat body and secreted into the hemolymph.

It localises to the secreted. Functionally, cytokine which promotes survival following infection by Sindbis virus by suppressing the immune deficiency pathway. Following infection by the enteropathogenic bacteria E.carotovora limits intestinal stem cells proliferation. When secreted from muscle or adipose tissue, can attenuate age-related intestinal tissue degeneration by inhibiting apoptosis. This Drosophila melanogaster (Fruit fly) protein is Protein Diedel.